We begin with the raw amino-acid sequence, 249 residues long: Putative S-adenosyl-L-methionine-dependent methyltransferase Mjls_0570 (249 aa).

S-adenosyl-L-methionine is bound by residues Asp111 and 141–142 (DL).

The protein belongs to the UPF0677 family.

Functionally, exhibits S-adenosyl-L-methionine-dependent methyltransferase activity. The chain is Putative S-adenosyl-L-methionine-dependent methyltransferase Mjls_0570 from Mycobacterium sp. (strain JLS).